Reading from the N-terminus, the 2318-residue chain is Neurogenic locus notch homolog protein 3 (2318 aa).

Residues 1-14 (MGLGARGRRRRRRL) show a composition bias toward basic residues. Positions 1 to 20 (MGLGARGRRRRRRLMALPPP) are disordered. The first 39 residues, 1–39 (MGLGARGRRRRRRLMALPPPPPPMRALPLLLLLAGLGAA), serve as a signal peptide directing secretion. EGF-like domains are found at residues 40–78 (APPC…ERCQ), 79–119 (LEDP…PDCS), and 120–157 (QPDP…QSCQ). The Extracellular portion of the chain corresponds to 40-1643 (APPCLDGSPC…PLEAPEQSVP (1604 aa)). Disulfide bonds link Cys-43-Cys-55, Cys-49-Cys-66, Cys-68-Cys-77, Cys-83-Cys-94, Cys-88-Cys-107, Cys-109-Cys-118, Cys-124-Cys-135, Cys-129-Cys-145, Cys-147-Cys-156, Cys-163-Cys-175, Cys-169-Cys-184, Cys-186-Cys-195, Cys-202-Cys-213, Cys-207-Cys-223, Cys-225-Cys-234, Cys-241-Cys-252, Cys-246-Cys-261, Cys-263-Cys-272, Cys-279-Cys-292, Cys-286-Cys-301, Cys-303-Cys-312, Cys-319-Cys-330, Cys-324-Cys-339, Cys-341-Cys-350, Cys-356-Cys-367, Cys-361-Cys-378, Cys-380-Cys-389, Cys-396-Cys-409, Cys-403-Cys-418, Cys-420-Cys-429, Cys-436-Cys-447, Cys-441-Cys-456, Cys-458-Cys-467, Cys-474-Cys-485, Cys-479-Cys-494, Cys-496-Cys-505, Cys-512-Cys-523, Cys-517-Cys-532, Cys-534-Cys-543, Cys-550-Cys-560, Cys-555-Cys-569, Cys-571-Cys-580, Cys-587-Cys-598, Cys-592-Cys-607, Cys-609-Cys-618, Cys-625-Cys-635, Cys-630-Cys-644, Cys-646-Cys-655, Cys-662-Cys-673, Cys-667-Cys-682, Cys-684-Cys-693, Cys-700-Cys-710, Cys-705-Cys-719, Cys-721-Cys-730, Cys-739-Cys-750, Cys-744-Cys-759, Cys-761-Cys-770, Cys-776-Cys-787, Cys-781-Cys-797, Cys-799-Cys-808, Cys-815-Cys-827, Cys-821-Cys-836, Cys-838-Cys-847, Cys-854-Cys-865, Cys-859-Cys-874, Cys-876-Cys-885, Cys-892-Cys-902, Cys-897-Cys-911, Cys-913-Cys-922, Cys-929-Cys-940, Cys-934-Cys-949, Cys-951-Cys-960, Cys-967-Cys-978, Cys-972-Cys-987, Cys-989-Cys-998, Cys-1005-Cys-1016, Cys-1010-Cys-1023, Cys-1025-Cys-1034, Cys-1041-Cys-1062, Cys-1056-Cys-1071, Cys-1073-Cys-1082, Cys-1089-Cys-1100, Cys-1094-Cys-1109, Cys-1111-Cys-1120, Cys-1127-Cys-1138, Cys-1132-Cys-1147, Cys-1149-Cys-1158, Cys-1165-Cys-1183, Cys-1177-Cys-1192, Cys-1194-Cys-1203, Cys-1210-Cys-1223, Cys-1215-Cys-1233, Cys-1235-Cys-1244, Cys-1251-Cys-1262, Cys-1256-Cys-1276, Cys-1278-Cys-1287, Cys-1294-Cys-1305, Cys-1299-Cys-1314, and Cys-1316-Cys-1325. The region spanning 159–196 (DIDECRSGTTCRHGGTCLNTPGSFRCQCPLGYTGLLCE) is the EGF-like 4; calcium-binding domain. The EGF-like 5 domain maps to 198–235 (PVVPCAPSPCRNGGTCRQSSDVTYDCACLPGFEGQNCE). Positions 237–273 (NVDDCPGHRCLNGGTCVDGVNTYNCQCPPEWTGQFCT) constitute an EGF-like 6; calcium-binding domain. Positions 275-313 (DVDECQLQPNACHNGGTCFNLLGGHSCVCVNGWTGESCS) constitute an EGF-like 7 domain. An EGF-like 8; calcium-binding domain is found at 315–351 (NIDDCATAVCFHGATCHDRVASFYCACPMGKTGLLCH). Residues 352-390 (LDDACVSNPCHEDAICDTNPVSGRAICTCPPGFTGGACD) form the EGF-like 9 domain. The 39-residue stretch at 392-430 (DVDECSIGANPCEHLGRCVNTQGSFLCQCGRGYTGPRCE) folds into the EGF-like 10; calcium-binding domain. Residues 432–468 (DVNECLSGPCRNQATCLDRIGQFTCICMAGFTGTYCE) form the EGF-like 11; calcium-binding domain. The EGF-like 12; calcium-binding domain occupies 470-506 (DIDECQSSPCVNGGVCKDRVNGFSCTCPSGFSGSMCQ). The EGF-like 13; calcium-binding domain maps to 508-544 (DVDECASTPCRNGAKCVDQPDGYECRCAEGFEGTLCE). Residues 546 to 581 (NVDDCSPDPCHHGRCVDGIASFSCACAPGYTGIRCE) enclose the EGF-like 14; calcium-binding domain. One can recognise an EGF-like 15; calcium-binding domain in the interval 583–619 (QVDECRSQPCRYGGKCLDLVDKYLCRCPPGTTGVNCE). The region spanning 621–656 (NIDDCASNPCTFGVCRDGINRYDCVCQPGFTGPLCN) is the EGF-like 16; calcium-binding domain. In terms of domain architecture, EGF-like 17; calcium-binding spans 658–694 (EINECASSPCGEGGSCVDGENGFHCLCPPGSLPPLCL). 3 EGF-like domains span residues 696 to 731 (ANHP…PRCS), 735 to 771 (APDA…HQCE), and 772 to 809 (VLSP…PRCQ). In terms of domain architecture, EGF-like 21; calcium-binding spans 811–848 (DVDECAGASPCGPHGTCTNLPGNFRCICHRGYTGPFCD). One can recognise an EGF-like 22; calcium-binding domain in the interval 850 to 886 (DIDDCDPNPCLHGGSCQDGVGSFSCSCLDGFAGPRCA). Positions 888 to 923 (DVDECLSSPCGPGTCTDHVASFTCACPPGYGGFHCE) constitute an EGF-like 23; calcium-binding domain. 5 EGF-like domains span residues 925 to 961 (DLPD…THCQ), 963 to 999 (EADP…SQCQ), 1001 to 1035 (PVDW…RLCD), 1037 to 1083 (QSLP…SHCE), and 1085 to 1121 (EVDP…DSCE). The EGF-like 29; calcium-binding domain occupies 1123–1159 (NIDECASQPCQNGGSCIDLVARYLCSCPPGTLGVLCE). Positions 1161–1204 (NEDDCDLGPSLDSGVQCLHNGTCVDLVGGFRCNCPPGYTGLHCE) constitute an EGF-like 30; calcium-binding domain. Asn-1180 is a glycosylation site (N-linked (GlcNAc...) asparagine). EGF-like domains lie at 1206-1245 (DINE…PRCQ), 1247-1288 (ALSP…LRCE), 1290-1326 (VARS…PSCR), and 1336-1374 (TNAS…PRCE). Asn-1337 carries N-linked (GlcNAc...) asparagine glycosylation. 12 disulfides stabilise this stretch: Cys-1340-Cys-1351, Cys-1345-Cys-1362, Cys-1364-Cys-1373, Cys-1388-Cys-1411, Cys-1393-Cys-1406, Cys-1402-Cys-1418, Cys-1429-Cys-1452, Cys-1434-Cys-1447, Cys-1443-Cys-1459, Cys-1468-Cys-1494, Cys-1476-Cys-1489, and Cys-1485-Cys-1501. LNR repeat units lie at residues 1388–1428 (CPRA…PWRQ), 1429–1466 (CEAL…GRDR), and 1468–1506 (CNPV…SEVP). N-linked (GlcNAc...) asparagine glycosylation is present at Asn-1439. Residues 1644–1664 (LLPLLVAGAVFLLIIFILGVM) traverse the membrane as a helical segment. Residues 1665–2318 (VARRKREHST…EVTPKRQVMA (654 aa)) lie on the Cytoplasmic side of the membrane. ANK repeat units lie at residues 1839–1868 (TGET…DTNA), 1872–1902 (SGRT…DLDA), 1906–1935 (DGST…DVNA), 1939–1968 (LGKS…NKDM), and 1972–2001 (KEET…NREI). 2 disordered regions span residues 2025–2045 (LDQP…PLLC) and 2058–2126 (QSGT…PLEG). The segment covering 2028-2045 (PSGPRSPSGPHGLGPLLC) has biased composition (low complexity). Position 2174 is an omega-N-methylarginine (Arg-2174). A compositionally biased stretch (low complexity) spans 2184 to 2193 (SFLLPLAPGP). The tract at residues 2184–2318 (SFLLPLAPGP…EVTPKRQVMA (135 aa)) is disordered. Residues 2242 to 2261 (HPYLTPSPESPEHWASPSPP) form a PEST-like region. Residues 2262 to 2282 (SLSDWSDSTPSPATATNATAS) show a composition bias toward low complexity. Over residues 2296-2305 (SLPQSQTQLG) the composition is skewed to polar residues.

This sequence belongs to the NOTCH family. Interacts with PSMA1. Heterodimer of a C-terminal fragment N(TM) and a N-terminal fragment N(EC) which are probably linked by disulfide bonds. Interacts with MAML1, MAML2 and MAML3 which act as transcriptional coactivators for NOTCH3. Interacts with HIF1AN. In terms of processing, synthesized in the endoplasmic reticulum as an inactive form which is proteolytically cleaved by a furin-like convertase in the trans-Golgi network before it reaches the plasma membrane to yield an active, ligand-accessible form. Cleavage results in a C-terminal fragment N(TM) and a N-terminal fragment N(EC). Following ligand binding, it is cleaved by TNF-alpha converting enzyme (TACE) to yield a membrane-associated intermediate fragment called notch extracellular truncation (NEXT). This fragment is then cleaved by presenilin dependent gamma-secretase to release a notch-derived peptide containing the intracellular domain (NICD) from the membrane. Post-translationally, phosphorylated. Hydroxylated by HIF1AN. In terms of tissue distribution, proliferating neuroepithelium.

Its subcellular location is the cell membrane. It is found in the nucleus. Functions as a receptor for membrane-bound ligands Jagged1, Jagged2 and Delta1 to regulate cell-fate determination. Upon ligand activation through the released notch intracellular domain (NICD) it forms a transcriptional activator complex with RBPJ/RBPSUH and activates genes of the enhancer of split locus. Affects the implementation of differentiation, proliferation and apoptotic programs. May play a role during CNS development. The protein is Neurogenic locus notch homolog protein 3 (Notch3) of Mus musculus (Mouse).